The sequence spans 435 residues: GTPase Obg (435 aa).

The region spanning 6 to 164 (ADFVDRVKIF…RWLELELKIL (159 aa)) is the Obg domain. The region spanning 165-335 (ADVGLVGYPN…LVSKLASIVR (171 aa)) is the OBG-type G domain. Residues 171–178 (GYPNVGKS), 196–200 (FTTLI), 217–220 (DIPG), 287–290 (NKID), and 316–318 (SAV) each bind GTP. 2 residues coordinate Mg(2+): Ser178 and Thr198. The 79-residue stretch at 357–435 (RRLPEKFHLE…IGDFEFEYRE (79 aa)) folds into the OCT domain.

The protein belongs to the TRAFAC class OBG-HflX-like GTPase superfamily. OBG GTPase family. In terms of assembly, monomer. Mg(2+) is required as a cofactor.

It localises to the cytoplasm. Its function is as follows. An essential GTPase which binds GTP, GDP and possibly (p)ppGpp with moderate affinity, with high nucleotide exchange rates and a fairly low GTP hydrolysis rate. Plays a role in control of the cell cycle, stress response, ribosome biogenesis and in those bacteria that undergo differentiation, in morphogenesis control. This chain is GTPase Obg, found in Thermotoga petrophila (strain ATCC BAA-488 / DSM 13995 / JCM 10881 / RKU-1).